An 878-amino-acid chain; its full sequence is Valine--tRNA ligase (878 aa).

A 'HIGH' region motif is present at residues Pro-43–His-53. The 'KMSKS' region signature appears at Lys-527–Ser-531. Lys-530 serves as a coordination point for ATP.

It belongs to the class-I aminoacyl-tRNA synthetase family. ValS type 2 subfamily.

Its subcellular location is the cytoplasm. The catalysed reaction is tRNA(Val) + L-valine + ATP = L-valyl-tRNA(Val) + AMP + diphosphate. Its function is as follows. Catalyzes the attachment of valine to tRNA(Val). As ValRS can inadvertently accommodate and process structurally similar amino acids such as threonine, to avoid such errors, it has a 'posttransfer' editing activity that hydrolyzes mischarged Thr-tRNA(Val) in a tRNA-dependent manner. The sequence is that of Valine--tRNA ligase from Methanocaldococcus jannaschii (strain ATCC 43067 / DSM 2661 / JAL-1 / JCM 10045 / NBRC 100440) (Methanococcus jannaschii).